Here is a 679-residue protein sequence, read N- to C-terminus: UvrABC system protein B (679 aa).

The 152-residue stretch at 25 to 176 folds into the Helicase ATP-binding domain; sequence YGVNQGKQYQ…NVRESLRELV (152 aa). Residue 38-45 coordinates ATP; that stretch reads GATGTGKT. The Beta-hairpin motif lies at 91–114; the sequence is YYDYYQPEAYVPVSDTYIAKTSSV. The Helicase C-terminal domain occupies 429 to 591; that stretch reads QIDDLLDEIR…IIPKPAGKKP (163 aa). The UVR domain maps to 639-674; sequence PEIIDKLEGKMNLAAEELDFEQAAKLRDRIRQLRKK.

The protein belongs to the UvrB family. Forms a heterotetramer with UvrA during the search for lesions. Interacts with UvrC in an incision complex.

It is found in the cytoplasm. The UvrABC repair system catalyzes the recognition and processing of DNA lesions. A damage recognition complex composed of 2 UvrA and 2 UvrB subunits scans DNA for abnormalities. Upon binding of the UvrA(2)B(2) complex to a putative damaged site, the DNA wraps around one UvrB monomer. DNA wrap is dependent on ATP binding by UvrB and probably causes local melting of the DNA helix, facilitating insertion of UvrB beta-hairpin between the DNA strands. Then UvrB probes one DNA strand for the presence of a lesion. If a lesion is found the UvrA subunits dissociate and the UvrB-DNA preincision complex is formed. This complex is subsequently bound by UvrC and the second UvrB is released. If no lesion is found, the DNA wraps around the other UvrB subunit that will check the other stand for damage. This chain is UvrABC system protein B, found in Prochlorococcus marinus (strain MIT 9211).